The sequence spans 448 residues: Tumor necrosis factor receptor superfamily member EDAR (448 aa).

An N-terminal signal peptide occupies residues 1–26 (MAHVGDCTQTPWLPVLVVSLMCSARA). Over 27–187 (EYSNCGENEY…LSGQGHLATA (161 aa)) the chain is Extracellular. TNFR-Cys repeat units lie at residues 30–71 (NCGE…DYGC), 73–113 (PCPA…DAEC), and 115–148 (PCLPGYYMLENRPRNIYGMVCYSCLLAPPNTKEC). Cystine bridges form between Cys-31/Cys-44, Cys-47/Cys-60, Cys-50/Cys-71, Cys-74/Cys-87, Cys-93/Cys-113, and Cys-135/Cys-148. Residue Asn-38 is glycosylated (N-linked (GlcNAc...) asparagine). Residues 188 to 208 (LIIAMSTIFIMAIAIVLIIMF) form a helical membrane-spanning segment. Residues 209–448 (YILKTKPSAP…PPASQPHAAS (240 aa)) lie on the Cytoplasmic side of the membrane. The interval 220–297 (CCTSHPGKSV…EEPAPDKQGS (78 aa)) is disordered. Over residues 233 to 243 (VSKDEEKKEAP) the composition is skewed to basic and acidic residues. The span at 271–283 (DASSENEQLLSRS) shows a compositional bias: polar residues. The region spanning 358–431 (RMLSSTYNSE…DAVESLCADI (74 aa)) is the Death domain.

In terms of assembly, binds to EDARADD. Associates with TRAF1, TRAF2, TRAF3 and NIK. In terms of tissue distribution, detected in fetal kidney, lung, skin and cultured neonatal epidermal keratinocytes. Not detected in lymphoblast and fibroblast cell lines.

It localises to the membrane. Its function is as follows. Receptor for EDA isoform A1, but not for EDA isoform A2. Mediates the activation of NF-kappa-B and JNK. May promote caspase-independent cell death. The protein is Tumor necrosis factor receptor superfamily member EDAR (EDAR) of Homo sapiens (Human).